The chain runs to 452 residues: MGFFLCSSSSIFFKFGISIIFLVSFSGLTPSEAYDPLDPSGNITVKWDIITWTGDGYVATVTVYNFQQYRHIQAPGWTLGWSWAKREVIWGMNGGQTTEQGDCSKFKGTIPHCCKKTPSVVDLLPGSPYNQQIANCCRGGVLNSWAQDPATAVSAFQLTVGQAGTTNKTVRVPKNFTLKAPGPGYTCSPAKIVKPTRFIGTDKRRVTQALMTWNVTCTYSQFLAQKTPTCCVSLSSFYNKTIVSCPTCSCGCRNTSQPGNCVDPKGPRIASVIPNPGKNAYIPPLVQCTKHMCPVRIHWHVKVNYKQYWRVKVTITNFNYNMNYSQWNLVVQHPNFDNLTQTFSFNYKPLTPYASINDTGILWGIKFYNDLLMQAGPFGNVQSELLFQKEASAFTFEKGWAFPRRIYFNGDNCVMPPPDSYPWLPNTGSHKSVGSLFAAMALLLIVFLHGNL.

The signal sequence occupies residues 1 to 33 (MGFFLCSSSSIFFKFGISIIFLVSFSGLTPSEA). N-linked (GlcNAc...) asparagine glycans are attached at residues asparagine 42, asparagine 167, asparagine 175, asparagine 214, asparagine 239, asparagine 254, asparagine 323, asparagine 338, and asparagine 357. The GPI-anchor amidated serine moiety is linked to residue serine 432. Residues 433–452 (VGSLFAAMALLLIVFLHGNL) constitute a propeptide, removed in mature form.

This sequence belongs to the COBRA family. Expressed in roots, stems, leaves, flowers and siliques.

The protein resides in the cell membrane. The chain is COBRA-like protein 1 (COBL1) from Arabidopsis thaliana (Mouse-ear cress).